Here is a 167-residue protein sequence, read N- to C-terminus: SsrA-binding protein (167 aa).

Positions 139–167 (QAHDKRHAEKEREWQRDKQRIMRAHNRNA) are disordered. Residues 144–158 (RHAEKEREWQRDKQR) show a composition bias toward basic and acidic residues.

This sequence belongs to the SmpB family.

Its subcellular location is the cytoplasm. In terms of biological role, required for rescue of stalled ribosomes mediated by trans-translation. Binds to transfer-messenger RNA (tmRNA), required for stable association of tmRNA with ribosomes. tmRNA and SmpB together mimic tRNA shape, replacing the anticodon stem-loop with SmpB. tmRNA is encoded by the ssrA gene; the 2 termini fold to resemble tRNA(Ala) and it encodes a 'tag peptide', a short internal open reading frame. During trans-translation Ala-aminoacylated tmRNA acts like a tRNA, entering the A-site of stalled ribosomes, displacing the stalled mRNA. The ribosome then switches to translate the ORF on the tmRNA; the nascent peptide is terminated with the 'tag peptide' encoded by the tmRNA and targeted for degradation. The ribosome is freed to recommence translation, which seems to be the essential function of trans-translation. This is SsrA-binding protein from Xylella fastidiosa (strain 9a5c).